Here is a 407-residue protein sequence, read N- to C-terminus: L-cysteine:1D-myo-inositol 2-amino-2-deoxy-alpha-D-glucopyranoside ligase (407 aa).

Cys43 is a Zn(2+) binding site. L-cysteinyl-5'-AMP is bound by residues Cys43–Thr46, Thr58, and Asn81–Thr83. The 'HIGH' region signature appears at Ile45 to His55. Residues Gln183–Pro188 carry the 'ERGGDP' region motif. Position 223 (Trp223) interacts with L-cysteinyl-5'-AMP. Cys227 is a Zn(2+) binding site. Gly245 to Asp247 serves as a coordination point for L-cysteinyl-5'-AMP. His252 serves as a coordination point for Zn(2+). Position 279 (Val279) interacts with L-cysteinyl-5'-AMP. A 'KMSKS' region motif is present at residues Lys285–Ser289.

It belongs to the class-I aminoacyl-tRNA synthetase family. MshC subfamily. In terms of assembly, monomer. Requires Zn(2+) as cofactor.

It carries out the reaction 1D-myo-inositol 2-amino-2-deoxy-alpha-D-glucopyranoside + L-cysteine + ATP = 1D-myo-inositol 2-(L-cysteinylamino)-2-deoxy-alpha-D-glucopyranoside + AMP + diphosphate + H(+). Catalyzes the ATP-dependent condensation of GlcN-Ins and L-cysteine to form L-Cys-GlcN-Ins. The polypeptide is L-cysteine:1D-myo-inositol 2-amino-2-deoxy-alpha-D-glucopyranoside ligase (Streptosporangium roseum (strain ATCC 12428 / DSM 43021 / JCM 3005 / KCTC 9067 / NCIMB 10171 / NRRL 2505 / NI 9100)).